The primary structure comprises 203 residues: Small ribosomal subunit protein uS4 (203 aa).

Residues 93 to 154 enclose the S4 RNA-binding domain; it reads RRLDNVVFRA…KSRNMDAVTD (62 aa).

This sequence belongs to the universal ribosomal protein uS4 family. Part of the 30S ribosomal subunit. Contacts protein S5. The interaction surface between S4 and S5 is involved in control of translational fidelity.

One of the primary rRNA binding proteins, it binds directly to 16S rRNA where it nucleates assembly of the body of the 30S subunit. Its function is as follows. With S5 and S12 plays an important role in translational accuracy. The protein is Small ribosomal subunit protein uS4 of Chlorobium luteolum (strain DSM 273 / BCRC 81028 / 2530) (Pelodictyon luteolum).